The primary structure comprises 186 residues: ATP synthase subunit delta (186 aa).

The protein belongs to the ATPase delta chain family. In terms of assembly, F-type ATPases have 2 components, F(1) - the catalytic core - and F(0) - the membrane proton channel. F(1) has five subunits: alpha(3), beta(3), gamma(1), delta(1), epsilon(1). F(0) has three main subunits: a(1), b(2) and c(10-14). The alpha and beta chains form an alternating ring which encloses part of the gamma chain. F(1) is attached to F(0) by a central stalk formed by the gamma and epsilon chains, while a peripheral stalk is formed by the delta and b chains.

It localises to the cell inner membrane. F(1)F(0) ATP synthase produces ATP from ADP in the presence of a proton or sodium gradient. F-type ATPases consist of two structural domains, F(1) containing the extramembraneous catalytic core and F(0) containing the membrane proton channel, linked together by a central stalk and a peripheral stalk. During catalysis, ATP synthesis in the catalytic domain of F(1) is coupled via a rotary mechanism of the central stalk subunits to proton translocation. In terms of biological role, this protein is part of the stalk that links CF(0) to CF(1). It either transmits conformational changes from CF(0) to CF(1) or is implicated in proton conduction. The protein is ATP synthase subunit delta of Nitrobacter winogradskyi (strain ATCC 25391 / DSM 10237 / CIP 104748 / NCIMB 11846 / Nb-255).